The primary structure comprises 364 residues: Dihydroorotate dehydrogenase (quinone) (364 aa).

Residues 61–65 (AGFDK) and S85 contribute to the FMN site. Residue K65 participates in substrate binding. A substrate-binding site is contributed by 110–114 (NRMGF). 2 residues coordinate FMN: N139 and N170. N170 provides a ligand contact to substrate. S173 functions as the Nucleophile in the catalytic mechanism. Position 175 (N175) interacts with substrate. FMN is bound by residues K214 and S242. Residue 243–244 (NT) participates in substrate binding. Residues G266, G295, and 316–317 (YS) each bind FMN.

This sequence belongs to the dihydroorotate dehydrogenase family. Type 2 subfamily. As to quaternary structure, monomer. The cofactor is FMN.

It is found in the cell membrane. It catalyses the reaction (S)-dihydroorotate + a quinone = orotate + a quinol. It participates in pyrimidine metabolism; UMP biosynthesis via de novo pathway; orotate from (S)-dihydroorotate (quinone route): step 1/1. Catalyzes the conversion of dihydroorotate to orotate with quinone as electron acceptor. In Bradyrhizobium sp. (strain ORS 278), this protein is Dihydroorotate dehydrogenase (quinone).